A 307-amino-acid chain; its full sequence is Probable acetylxylan esterase A (307 aa).

A signal peptide spans methionine 1 to alanine 19. Serine 150 acts as the Charge relay system in catalysis. 2 N-linked (GlcNAc...) asparagine glycosylation sites follow: asparagine 192 and asparagine 270.

This sequence belongs to the carbohydrate esterase 1 (CE1) family. AxeA subfamily. As to quaternary structure, monomer.

Its subcellular location is the secreted. It carries out the reaction Deacetylation of xylans and xylo-oligosaccharides.. It participates in glycan degradation; xylan degradation. Functionally, acetylxylan esterase involved in the hydrolysis of xylan, a major structural heterogeneous polysaccharide found in plant biomass representing the second most abundant polysaccharide in the biosphere, after cellulose. Degrades acetylated xylans by cleaving acetyl side groups from the hetero-xylan backbone. This is Probable acetylxylan esterase A (axeA) from Aspergillus flavus.